Consider the following 908-residue polypeptide: UPF0182 protein NT01CX_0852 (908 aa).

The next 7 helical transmembrane spans lie at 8–28 (IGLF…VNVI), 47–67 (FTSV…AIKT), 96–116 (IINA…SLGY), 157–177 (LLSL…FLNI), 209–229 (LAIL…IKAW), 253–273 (FYIA…FSIL), and 280–300 (IISC…VSGA).

The protein belongs to the UPF0182 family.

The protein resides in the cell membrane. The protein is UPF0182 protein NT01CX_0852 of Clostridium novyi (strain NT).